Reading from the N-terminus, the 493-residue chain is MSQQHTLPVTLPAALSQKLLDTVPPPVNTQQEQRKQPAPLPPPCQKVPVELPVEVLSKHEEKHMTIVKGVPEQECEQQQPQEQELQQQHWEQDKEHQKAENPEQQLKQEKVQREKQQLQGQLEEEKKLLDQQLDQELAKRDEQLGTKKEQLLEFPEQQEGQLKHLEQEEGHLELPEQQEGQLKNLEHQEKPLELPEQQEGQLKHLEQQEKPLELPEQQEGQLKHLEQQEGQSELPEQQRGQPKYLEQEEGQLKHLEEQKGQLKHLEHEEGQLELPEQVGQPKHLEQLEKQLEHPEQQEGQLKHLEEEEGQVKHLGEQEEQLKHLEQQEEQLKHLEQQEGQLEHLEQQEGQLKHLEQHEGQLELPEQQVGQSKHLEQEEKQLEHPEQQEGQLKHLGKQKAQLELTEQVGQPKHLEQQEKQLEHPQQQEEQLKPQEQQEGQLKDLEQQERQLEQPVFASAPGQVQDIQQALPPKGEVLLPVEQQQQKQEVQGQHE.

3 disordered regions span residues 1 to 47 (MSQQ…CQKV), 60 to 123 (EEKH…GQLE), and 139 to 493 (KRDE…GQHE). Positions 76–89 (EQQQPQEQELQQQH) are enriched in low complexity. 5 stretches are compositionally biased toward basic and acidic residues: residues 90 to 116 (WEQD…REKQ), 139 to 151 (KRDE…KEQL), 161 to 174 (QLKH…HLEL), 184 to 193 (NLEHQEKPLE), and 201 to 213 (QLKH…KPLE). The span at 228–240 (QEGQSELPEQQRG) shows a compositional bias: polar residues. Basic and acidic residues-rich tracts occupy residues 250–270 (GQLK…HEEG), 282–360 (KHLE…HEGQ), 372–386 (KHLE…HPEQ), 411–431 (KHLE…EQLK), and 439–450 (QLKDLEQQERQL). Residues 473–493 (GEVLLPVEQQQQKQEVQGQHE) show a composition bias toward low complexity.

It belongs to the involucrin family. Directly or indirectly cross-linked to cornifelin (CNFN). Post-translationally, substrate of transglutaminase. Specific glutamines or lysines are cross-linked to keratins, desmoplakin and to inter involucrin molecules. In terms of tissue distribution, keratinocytes of epidermis and other stratified squamous epithelia.

It localises to the cytoplasm. In terms of biological role, part of the insoluble cornified cell envelope (CE) of stratified squamous epithelia. The sequence is that of Involucrin (IVL) from Saguinus oedipus (Cotton-top tamarin).